The chain runs to 252 residues: 5-oxoprolinase subunit A (252 aa).

This sequence belongs to the LamB/PxpA family. Forms a complex composed of PxpA, PxpB and PxpC.

The catalysed reaction is 5-oxo-L-proline + ATP + 2 H2O = L-glutamate + ADP + phosphate + H(+). Functionally, catalyzes the cleavage of 5-oxoproline to form L-glutamate coupled to the hydrolysis of ATP to ADP and inorganic phosphate. The protein is 5-oxoprolinase subunit A of Mycobacterium avium (strain 104).